The chain runs to 421 residues: Transcription factor rglT (421 aa).

The tract at residues 1–29 (MQYEAYQWGQSHPTSTSGSMLQDTPTAAS) is disordered. Polar residues predominate over residues 8–29 (WGQSHPTSTSGSMLQDTPTAAS). Positions 38–65 (CDECRKRKLKCSGEISGCSRCIKQSLSC) form a DNA-binding region, zn(2)-C6 fungal-type. Positions 346 to 357 (EARQRRWHESPD) are enriched in basic and acidic residues. A disordered region spans residues 346-371 (EARQRRWHESPDSHPLPPDQRLNIPS).

It localises to the nucleus. Its function is as follows. Transcription factor that is important for oxidative stress resistance and essential for gliotoxin (GT) self-protection through the regulation of a gene encoding a putative gliT homolog, even if E.nidulans does not produce gliotoxin itself. The sequence is that of Transcription factor rglT from Emericella nidulans (strain FGSC A4 / ATCC 38163 / CBS 112.46 / NRRL 194 / M139) (Aspergillus nidulans).